The sequence spans 341 residues: Cell wall mannoprotein PIR1 (341 aa).

Positions 1-18 are cleaved as a signal peptide; that stretch reads MQYKKSLVASALVATSLA. The propeptide occupies 19–63; it reads AYAPKDPWSTLTPSATYKGGITDYSSTFGIAVEPIATTASSKAKR. PIR1/2/3 repeat units lie at residues 64–82, 83–101, 102–125, 126–144, 145–163, 164–182, 183–201, and 202–220; these read AAAISQIGDGQIQATTKTT, AAAVSQIGDGQIQATTKTK, AAAVSQIGDGQIQATTKTTSAKTT, AAAVSQIGDGQIQATTKTT, AAAVSQIGDGQIQATTNTT, and VAPVSQITDGQIQATTLTS.

It belongs to the PIR protein family. Post-translationally, covalently linked to beta-1,3-glucan of the inner cell wall layer via an alkali-sensitive ester linkage between the gamma-carboxyl group of glutamic acids, arising from specific glutamines within the PIR1/2/3 repeats, and hydroxyl groups of glucoses of beta-1,3-glucan chains. In terms of processing, O-glycosylated. Extensively O-mannosylated.

The protein localises to the secreted. Its subcellular location is the cell wall. Its function is as follows. Component of the outer cell wall layer. Required for stability of the cell wall and for optimal growth. Required for resistance against several antifungal and cell wall-perturbing agents and for tolerance to heat shock. This chain is Cell wall mannoprotein PIR1 (PIR1), found in Saccharomyces cerevisiae (strain ATCC 204508 / S288c) (Baker's yeast).